The sequence spans 337 residues: Inner membrane protein YhjD (337 aa).

Residues 1-29 are compositionally biased toward basic and acidic residues; it reads MTQENEIKRPIQDLEHEPIKPLDNSEKGS. Residues 1-31 form a disordered region; sequence MTQENEIKRPIQDLEHEPIKPLDNSEKGSKV. Topologically, residues 1 to 74 are cytoplasmic; sequence MTQENEIKRP…LGNQFGAAIT (74 aa). Residues 75–97 form a helical membrane-spanning segment; it reads YFSFLSMIPILMVSFAAGGFVLA. The Periplasmic portion of the chain corresponds to 98 to 133; that stretch reads SHPMLLQDIFDKILQNISDPTLAATLKNTINTAVQQ. Residues 134-156 form a helical membrane-spanning segment; that stretch reads RTTVGLVGLAVALYSGINWMGNL. Residues 157–185 are Cytoplasmic-facing; it reads REAIRAQSRDVWERSPQDQEKFWVKYLRD. Residues 186 to 208 form a helical membrane-spanning segment; that stretch reads FISLIGLLIALIVTLSITSVAGS. Residues 209-227 are Periplasmic-facing; it reads AQQMIISALHLNSIEWLKP. Residues 228–250 traverse the membrane as a helical segment; that stretch reads TWRLIGLAISIFANYLLFFWIFW. Over 251-261 the chain is Cytoplasmic; it reads RLPRHRPRKKA. Residues 262–284 form a helical membrane-spanning segment; the sequence is LIRGTFLAAIGFEVIKIVMTYTL. The Periplasmic portion of the chain corresponds to 285 to 298; that stretch reads PSLMKSPSGAAFGS. Residues 299-321 traverse the membrane as a helical segment; that stretch reads VLGLMAFFYFFARLTLFCAAWIA. Residues 322–337 lie on the Cytoplasmic side of the membrane; sequence TAEYKDDPRMPGKTQP.

It localises to the cell inner membrane. The protein is Inner membrane protein YhjD (yhjD) of Escherichia coli (strain K12).